The sequence spans 215 residues: METTALTNLNYQQTHFVMSAPDIRHLPSDTGIEVAFAGRSNAGKSSALNTLTNQKSLARTSKTPGRTQLINLFEVADGKRLVDLPGYGYAEVPEEMKRKWQRALGEYLEKRQSLQGLVVLMDIRHPLKDLDQQMIEWAVDSNIAVLVLLTKADKLASGARKAQLNMVREAVLAFNGDVQVETFSSLKKQGVDKLRQKLDTWFSEMQPVEETQDGE.

One can recognise an EngB-type G domain in the interval T30–E204. GTP contacts are provided by residues G38 to S45, G65 to L69, D83 to G86, T150 to D153, and F183 to S185. Positions 45 and 67 each coordinate Mg(2+).

Belongs to the TRAFAC class TrmE-Era-EngA-EngB-Septin-like GTPase superfamily. EngB GTPase family. It depends on Mg(2+) as a cofactor.

Functionally, necessary for normal cell division and for the maintenance of normal septation. This Escherichia coli O1:K1 / APEC protein is Probable GTP-binding protein EngB.